Here is a 241-residue protein sequence, read N- to C-terminus: Small ribosomal subunit protein uS3 (241 aa).

The 69-residue stretch at 39 to 107 (IREILHKELK…DVVINIVEIR (69 aa)) folds into the KH type-2 domain. The tract at residues 217–241 (KRMAEGETGGGGDRGGRQRRDNAAV) is disordered. The span at 230-241 (RGGRQRRDNAAV) shows a compositional bias: basic and acidic residues.

This sequence belongs to the universal ribosomal protein uS3 family. As to quaternary structure, part of the 30S ribosomal subunit. Forms a tight complex with proteins S10 and S14.

In terms of biological role, binds the lower part of the 30S subunit head. Binds mRNA in the 70S ribosome, positioning it for translation. In Bradyrhizobium diazoefficiens (strain JCM 10833 / BCRC 13528 / IAM 13628 / NBRC 14792 / USDA 110), this protein is Small ribosomal subunit protein uS3.